The sequence spans 293 residues: Glutamine sensor pib2 (293 aa).

The segment at A38–Q75 is disordered. Low complexity predominate over residues T44–P62. Residues A63–Q75 are compositionally biased toward polar residues. The segment at D156–L220 adopts an FYVE-type; degenerate zinc-finger fold. Positions 178, 181, 212, and 215 each coordinate Zn(2+). The segment covering A242–N256 has biased composition (polar residues). Residues A242–S276 are disordered. A Phosphoserine modification is found at S259.

As to quaternary structure, interacts with the TORC1 complex when activated by glutamine or cysteine.

The protein resides in the vacuole membrane. With respect to regulation, activated by glutamine. Functionally, functions as an intracellular glutamine sensor that directly activates the TORC1 signaling pathway, to promote cell growth when glutamine is available. The chain is Glutamine sensor pib2 from Schizosaccharomyces pombe (strain 972 / ATCC 24843) (Fission yeast).